Here is a 360-residue protein sequence, read N- to C-terminus: Glutamate 5-kinase (360 aa).

Position 7 (lysine 7) interacts with ATP. Residues serine 47, aspartate 134, and asparagine 146 each contribute to the substrate site. Residues 166–167 and 210–216 each bind ATP; these read TD and TGGITTK. A PUA domain is found at 275–348; it reads VGQITLDEGA…LNKKENINSS (74 aa).

Belongs to the glutamate 5-kinase family.

The protein localises to the cytoplasm. The enzyme catalyses L-glutamate + ATP = L-glutamyl 5-phosphate + ADP. Its pathway is amino-acid biosynthesis; L-proline biosynthesis; L-glutamate 5-semialdehyde from L-glutamate: step 1/2. Functionally, catalyzes the transfer of a phosphate group to glutamate to form L-glutamate 5-phosphate. The sequence is that of Glutamate 5-kinase from Prochlorococcus marinus subsp. pastoris (strain CCMP1986 / NIES-2087 / MED4).